The sequence spans 113 residues: Tyrosine-protein phosphatase 15 (113 aa).

The Tyrosine-protein phosphatase domain occupies 1–113 (WRMVYDNNVN…RSTGDGVALI (113 aa)).

Belongs to the protein-tyrosine phosphatase family.

It carries out the reaction O-phospho-L-tyrosyl-[protein] + H2O = L-tyrosyl-[protein] + phosphate. This chain is Tyrosine-protein phosphatase 15 (STY-15), found in Styela plicata (Wrinkled sea squirt).